The primary structure comprises 150 residues: 6,7-dimethyl-8-ribityllumazine synthase (150 aa).

Residues F11, 43 to 45, and 67 to 69 each bind 5-amino-6-(D-ribitylamino)uracil; these read VYD and AVI. 72 to 73 contributes to the (2S)-2-hydroxy-3-oxobutyl phosphate binding site; sequence AT. The active-site Proton donor is H75. Residue L100 coordinates 5-amino-6-(D-ribitylamino)uracil. R115 contacts (2S)-2-hydroxy-3-oxobutyl phosphate.

Belongs to the DMRL synthase family.

It catalyses the reaction (2S)-2-hydroxy-3-oxobutyl phosphate + 5-amino-6-(D-ribitylamino)uracil = 6,7-dimethyl-8-(1-D-ribityl)lumazine + phosphate + 2 H2O + H(+). The protein operates within cofactor biosynthesis; riboflavin biosynthesis; riboflavin from 2-hydroxy-3-oxobutyl phosphate and 5-amino-6-(D-ribitylamino)uracil: step 1/2. Its function is as follows. Catalyzes the formation of 6,7-dimethyl-8-ribityllumazine by condensation of 5-amino-6-(D-ribitylamino)uracil with 3,4-dihydroxy-2-butanone 4-phosphate. This is the penultimate step in the biosynthesis of riboflavin. The protein is 6,7-dimethyl-8-ribityllumazine synthase of Pyrobaculum aerophilum (strain ATCC 51768 / DSM 7523 / JCM 9630 / CIP 104966 / NBRC 100827 / IM2).